The following is a 488-amino-acid chain: Long chain base biosynthesis protein 2a (488 aa).

The chain crosses the membrane as a helical span at residues 4–24 (LPYTTALTTLFSYGLLFAFGQ). Residue Lys-311 is modified to N6-(pyridoxal phosphate)lysine.

The protein belongs to the class-II pyridoxal-phosphate-dependent aminotransferase family. In terms of assembly, heterodimer with LCB1. Component of the serine palmitoyltransferase (SPT) complex, composed of LCB1 and LCB2. Pyridoxal 5'-phosphate is required as a cofactor.

The protein localises to the endoplasmic reticulum membrane. The catalysed reaction is L-serine + hexadecanoyl-CoA + H(+) = 3-oxosphinganine + CO2 + CoA. It functions in the pathway lipid metabolism; sphingolipid metabolism. Its function is as follows. Serine palmitoyltransferase (SPT). The heterodimer formed with LCB1 constitutes the catalytic core. This chain is Long chain base biosynthesis protein 2a, found in Oryza sativa subsp. japonica (Rice).